A 348-amino-acid chain; its full sequence is Nicotinate-nucleotide--dimethylbenzimidazole phosphoribosyltransferase (348 aa).

Glu-316 acts as the Proton acceptor in catalysis.

Belongs to the CobT family.

It catalyses the reaction 5,6-dimethylbenzimidazole + nicotinate beta-D-ribonucleotide = alpha-ribazole 5'-phosphate + nicotinate + H(+). Its pathway is nucleoside biosynthesis; alpha-ribazole biosynthesis; alpha-ribazole from 5,6-dimethylbenzimidazole: step 1/2. In terms of biological role, catalyzes the synthesis of alpha-ribazole-5'-phosphate from nicotinate mononucleotide (NAMN) and 5,6-dimethylbenzimidazole (DMB). This is Nicotinate-nucleotide--dimethylbenzimidazole phosphoribosyltransferase from Xanthomonas campestris pv. campestris (strain 8004).